A 636-amino-acid chain; its full sequence is MTNALLSIAVLLFSMLSLAQAETHTFNWTTGWDYRNVDGLKSRPVITCNGQFPWPDITVNKGDRVQIYLTNGMNNTNTSMHFHGLFQNGTASMDGVPFLTQCPIAPGSTMLYNFTVDYNVGTYWYHSHTDGQYEDGMKGLFIIKDDSFPYDYDEELSLSLSEWYHDLVTDLTKSFMSVYNPTGAEPIPQNLIVNNTMNLTWEVQPDTTYLLRIVNVGGFVSQYFWIEDHEMTVVEIDGITTEKNVTDMLYITVAQRYTVLVHTKNDTDKNFAIMQKFDDTMLDVIPSDLQLNATSYMVYNKTAALPTQNYVDSIDNFLDDFYLQPYEKEAIYGEPDHVITVDVVMDNLKNGVNYAFFNNITYTAPKVPTLMTVLSSGDQANNSEIYGSNTHTFILEKDEIVEIVLNNQDTGTHPFHLHGHAFQTIQRDRTYDDALGEVPHSFDPDNHPAFPEYPMRRDTLYVRPQSNFVIRFKADNPGVWFFHCHIEWHLLQGLGLVLVEDPFGIQDAHSQQLSENHLEVCQSCSVATEGNAAANTLDLTDLTGENVQHAFIPTGFTKKGIIAMTFSCFAGILGIITIAIYGMMDMEDATEKVIRDLHVDPEVLLNEVDENEERQVNEDRHSTEKHQFLTKAKRFF.

The N-terminal stretch at 1–21 (MTNALLSIAVLLFSMLSLAQA) is a signal peptide. Residues 22-559 (ETHTFNWTTG…AFIPTGFTKK (538 aa)) lie on the Extracellular side of the membrane. N-linked (GlcNAc...) asparagine glycans are attached at residues asparagine 27, asparagine 74, and asparagine 77. Plastocyanin-like domains are found at residues 32–146 (WDYR…IKDD) and 157–301 (SLSL…VYNK). Cu cation is bound by residues histidine 81 and histidine 83. Asparagine 88 and asparagine 113 each carry an N-linked (GlcNAc...) asparagine glycan. Cu cation-binding residues include histidine 126 and histidine 128. N-linked (GlcNAc...) asparagine glycosylation is found at asparagine 194, asparagine 198, asparagine 244, asparagine 265, asparagine 292, asparagine 300, asparagine 359, and asparagine 381. The 141-residue stretch at 362–502 (YTAPKVPTLM…GLGLVLVEDP (141 aa)) folds into the Plastocyanin-like 3 domain. Histidine 413, histidine 416, histidine 418, histidine 483, cysteine 484, histidine 485, and histidine 489 together coordinate Cu cation. Residues 560 to 584 (GIIAMTFSCFAGILGIITIAIYGMM) form a helical membrane-spanning segment. Residues 585-636 (DMEDATEKVIRDLHVDPEVLLNEVDENEERQVNEDRHSTEKHQFLTKAKRFF) are Cytoplasmic-facing.

It belongs to the multicopper oxidase family. It depends on Cu cation as a cofactor.

It is found in the cell membrane. It carries out the reaction 4 Fe(2+) + O2 + 4 H(+) = 4 Fe(3+) + 2 H2O. The enzyme catalyses 4 Cu(+) + O2 + 4 H(+) = 4 Cu(2+) + 2 H2O. Functionally, iron transport multicopper ferroxidase required for Fe(2+) ion high affinity uptake. Required to oxidize Fe(2+) to Fe(3+), which is then transported into the cell via the ferric iron permease FTR1. Essential component of copper-dependent iron transport. Also has cuprous oxidase activity. This is Iron transport multicopper oxidase FET3 (FET3) from Saccharomyces cerevisiae (strain ATCC 204508 / S288c) (Baker's yeast).